Here is a 403-residue protein sequence, read N- to C-terminus: Argininosuccinate synthase (403 aa).

ATP contacts are provided by residues 13–21 and A40; that span reads AYSGGLDTS. The L-citrulline site is built by Y91 and S96. Position 121 (G121) interacts with ATP. The L-aspartate site is built by T123, N127, and D128. An L-citrulline-binding site is contributed by N127. Positions 131, 180, 189, 265, and 277 each coordinate L-citrulline.

It belongs to the argininosuccinate synthase family. Type 1 subfamily. In terms of assembly, homotetramer.

Its subcellular location is the cytoplasm. The enzyme catalyses L-citrulline + L-aspartate + ATP = 2-(N(omega)-L-arginino)succinate + AMP + diphosphate + H(+). Its pathway is amino-acid biosynthesis; L-arginine biosynthesis; L-arginine from L-ornithine and carbamoyl phosphate: step 2/3. In Leptospira borgpetersenii serovar Hardjo-bovis (strain JB197), this protein is Argininosuccinate synthase.